The chain runs to 280 residues: Diaminopimelate epimerase (280 aa).

Substrate contacts are provided by Asn-14 and Asn-67. The active-site Proton donor is the Cys-76. Residues 77–78 (GN), Asn-193, and 210–211 (ER) each bind substrate. Cys-220 serves as the catalytic Proton acceptor. Position 221-222 (221-222 (GT)) interacts with substrate.

This sequence belongs to the diaminopimelate epimerase family. As to quaternary structure, homodimer.

The protein localises to the cytoplasm. It carries out the reaction (2S,6S)-2,6-diaminopimelate = meso-2,6-diaminopimelate. It functions in the pathway amino-acid biosynthesis; L-lysine biosynthesis via DAP pathway; DL-2,6-diaminopimelate from LL-2,6-diaminopimelate: step 1/1. Its function is as follows. Catalyzes the stereoinversion of LL-2,6-diaminopimelate (L,L-DAP) to meso-diaminopimelate (meso-DAP), a precursor of L-lysine. In Methanocella arvoryzae (strain DSM 22066 / NBRC 105507 / MRE50), this protein is Diaminopimelate epimerase.